The chain runs to 214 residues: Protein DEHYDRATION-INDUCED 19 homolog 5 (214 aa).

A Phosphoserine modification is found at Ser110. Residues 148–185 (PKKSKLVQPDSSSEASMEDNSLIRDSTEKDWESPSPLS) are disordered. Residues 156 to 166 (PDSSSEASMED) are compositionally biased toward polar residues. Residues 168–179 (SLIRDSTEKDWE) show a composition bias toward basic and acidic residues.

It belongs to the Di19 family. In terms of processing, phosphorylated in vitro by CPK3 or CPK11. Expressed in seedlings, roots, leaves, stems, flowers and siliques.

Its subcellular location is the nucleus. The protein is Protein DEHYDRATION-INDUCED 19 homolog 5 (DI19-5) of Arabidopsis thaliana (Mouse-ear cress).